The sequence spans 87 residues: Small ribosomal subunit protein bS16 (87 aa).

Belongs to the bacterial ribosomal protein bS16 family.

This chain is Small ribosomal subunit protein bS16, found in Ehrlichia ruminantium (strain Gardel).